Reading from the N-terminus, the 110-residue chain is B3 domain-containing protein LOC_Os02g10420 (110 aa).

Positions 1 to 104 (MSAMLNENVP…VLSVTVHKAD (104 aa)) form a DNA-binding region, TF-B3.

It is found in the nucleus. In Oryza sativa subsp. japonica (Rice), this protein is B3 domain-containing protein LOC_Os02g10420.